A 490-amino-acid chain; its full sequence is GTPase Der (490 aa).

EngA-type G domains lie at 3 to 166 (PVVA…MEDL) and 203 to 376 (IKLA…DSST). Residues 9-16 (GRPNVGKS), 56-60 (DTGGI), 118-121 (NKTD), 209-216 (GRPNVGKS), 256-260 (DTAGV), and 321-324 (NKWD) contribute to the GTP site. The KH-like domain occupies 377-461 (RRVGTSMLTR…PIRIQFKEGE (85 aa)).

It belongs to the TRAFAC class TrmE-Era-EngA-EngB-Septin-like GTPase superfamily. EngA (Der) GTPase family. Associates with the 50S ribosomal subunit.

GTPase that plays an essential role in the late steps of ribosome biogenesis. The chain is GTPase Der from Escherichia coli O127:H6 (strain E2348/69 / EPEC).